The primary structure comprises 355 residues: C-C chemokine receptor type 1 (355 aa).

Residues 1–34 are Extracellular-facing; it reads METPDTTENYDMITEFDYGDATPCHKVNERAILA. A helical transmembrane segment spans residues 35 to 60; sequence QLLPPLYSLVFVIGVVGNLLVVLVLV. Residues 61-64 lie on the Cytoplasmic side of the membrane; it reads QYKR. A helical transmembrane segment spans residues 65 to 91; it reads LKNMTNIYLLNLAISDLLFLFTLPFLI. The Extracellular segment spans residues 92 to 107; the sequence is YYKSTDDWIFGDAMCK. A disulfide bridge links C106 with C183. A helical membrane pass occupies residues 108-129; it reads ILSGFYYTGLYSEIFFIILLTI. Residues 130–146 are Cytoplasmic-facing; the sequence is DRYLAIVHAVFALRART. A helical transmembrane segment spans residues 147–171; that stretch reads VTFGVITSIIIWALAILASSPLMYF. At 172–197 the chain is on the extracellular side; the sequence is SKTQWNIVRHSCNLHFPYESFQQWKL. A helical membrane pass occupies residues 198–223; the sequence is FQALKLNLFGLVLPLLVMIVCYTGII. The Cytoplasmic segment spans residues 224 to 239; sequence KILLRRPNEKKSKAVR. A helical membrane pass occupies residues 240-264; that stretch reads LIFVIMIIFFLFWTPYNLTELISVF. Residues 265-281 lie on the Extracellular side of the membrane; it reads QEFLFTHLCEQNRQLDL. Residues 282–305 traverse the membrane as a helical segment; the sequence is AMEVTEVIANMHCCVNPVIYAFAG. At 306–355 the chain is on the cytoplasmic side; sequence ERFRKYLRQLFHRRVAVHLVKWLPFLSGDRLERVSSTSPSTGEHELSAGL.

It belongs to the G-protein coupled receptor 1 family. Interacts with CREB3. Interacts with CCL3. Interacts with CCL15. Interacts with CCL23. Interacts with GNAI1. Interacts with PF4/CXCL4.

It localises to the cell membrane. Its function is as follows. Chemokine receptor that plays a crucial role in regulating immune cell migration, inflammation, and immune responses. Contributes to the inflammatory response by recruiting immune cells, such as monocytes, macrophages, T-cells, and dendritic cells, to sites of inflammation for the clearance of pathogens and the resolution of tissue damage. When activated by its ligands including CCL3, CCL5-9, CCL13-16 and CCL23, triggers a signaling cascade within immune cells, leading to their migration towards the source of the chemokine. For example, mediates neutrophil migration after activation by CCL3 leading to the sequential release of TNF-alpha and leukotriene B4. Also mediates monocyte migration upon CXCL4 binding. Activation by CCL5 results in neuroinflammation through the ERK1/2 signaling pathway. In Macaca fascicularis (Crab-eating macaque), this protein is C-C chemokine receptor type 1 (CCR1).